A 153-amino-acid chain; its full sequence is Putative pre-16S rRNA nuclease (153 aa).

The protein belongs to the YqgF nuclease family.

Its subcellular location is the cytoplasm. In terms of biological role, could be a nuclease involved in processing of the 5'-end of pre-16S rRNA. The sequence is that of Putative pre-16S rRNA nuclease from Prochlorococcus marinus (strain AS9601).